Consider the following 468-residue polypeptide: Interferon-induced protein with tetratricopeptide repeats 2 (468 aa).

The residue at position 2 (Ser2) is an N-acetylserine. TPR repeat units lie at residues 51–89 (ATMCNILAFVKHRRGQNASALKELEKAEQFIQQQHPDHV), 90–135 (EIRN…RIES), 136–171 (PELDCEEGWARLKCTRNQNERVKVCFEKALEKDPKN), 172–208 (PEFTSGWAISNYRLDFWPAQQNAVDSLKQAIRMSPNS), 242–275 (TDVLRSAARFYYKTHDKDRAIQLLSQALELLPNN), 276–328 (AYVY…MIKD), 329–359 (SCSYLAHLYVLAEQYKEADYYFQKGFKKELT), 360–398 (PGLKQLLHLRYGNFQFFQMKCEDKAIHQYLEGVKIRQKT), and 399–441 (KPKE…ESQQ). The disordered stretch occupies residues 441 to 468 (QAAKVSERGQDSERPVFSPSLHEGGNEQ). A compositionally biased stretch (basic and acidic residues) spans 445-454 (VSERGQDSER).

It belongs to the IFIT family. As to quaternary structure, domain-swapped homodimer. Component of an interferon-dependent multiprotein complex, at least composed of IFIT1, IFIT2 and IFIT3. Interacts with IFIT1 and IFIT3. Interacts with STING1/MITA and disrupts its interaction with MAVS or TBK1. Interacts with EIF3E and EIF3C.

The protein resides in the cytoplasm. It localises to the endoplasmic reticulum. Functionally, IFN-induced antiviral protein which inhibits expression of viral messenger RNAs lacking 2'-O-methylation of the 5' cap. The ribose 2'-O-methylation would provide a molecular signature to distinguish between self and non-self mRNAs by the host during viral infection. Viruses evolved several ways to evade this restriction system such as encoding their own 2'-O-methylase for their mRNAs or by stealing host cap containing the 2'-O-methylation (cap snatching mechanism). Binds AU-rich viral RNAs, with or without 5' triphosphorylation, RNA-binding is required for antiviral activity. Can promote apoptosis. The protein is Interferon-induced protein with tetratricopeptide repeats 2 (IFIT2) of Cricetulus griseus (Chinese hamster).